The sequence spans 313 residues: Porphobilinogen deaminase (313 aa).

Cysteine 242 bears the S-(dipyrrolylmethanemethyl)cysteine mark.

It belongs to the HMBS family. Monomer. The cofactor is dipyrromethane.

The enzyme catalyses 4 porphobilinogen + H2O = hydroxymethylbilane + 4 NH4(+). It participates in porphyrin-containing compound metabolism; protoporphyrin-IX biosynthesis; coproporphyrinogen-III from 5-aminolevulinate: step 2/4. Functionally, tetrapolymerization of the monopyrrole PBG into the hydroxymethylbilane pre-uroporphyrinogen in several discrete steps. The sequence is that of Porphobilinogen deaminase from Pectobacterium atrosepticum (strain SCRI 1043 / ATCC BAA-672) (Erwinia carotovora subsp. atroseptica).